The primary structure comprises 758 residues: MRTLTHNLGFPRIGAQRELKKALETYWKGQNDVDQLLATARAIRTGNWLLQQKAGIDLIPVGDFSLYDHILDMTTLLGAIPHRFGNTGDKISPDLYFAMARGTADQPAMEMTKWFNTNYHYIVPEFDDTTQFRLASDRLFQEIEDAKALGITAKAVLIGPLTYLYLGKEVTPGFQRLDLLPRLLPVYREILQKIASLGVEWVQIDEPILSLDLEQPWRDSFAEAYHTLHDGSCRLLLTTYFGTVDHHLTLLKNLPVDGLHIDVSSAPEQLESFLTEDFSGKTLSLGCIDGRNIWRADLSQKLETLSQAASRFAGELWIAPSCSLLHCPVDLALETKLEPEIKNWLAFSAQKLEEMTTLGRGLNQGRESVEAILTASDEARRSRTESSRIHNPIVHQRVDNLTERDSQRNHPFATRKHLQQQRFNLPLLPTTTIGSFPQTATIRQARAAFRKNELSHLEYLSAMRAEIREMIRKQEEIGLDVLVHGEPERNDMVEYFGEQLWGYAFTENGWVQSYGSRCVKPPILYGDVYRPEAMTVEWIKYAQSQTGKPVKGMLTGPVTMLMWSFVRDDQPRSTTALQLALAIRDEVADLENAGIGMIQIDEPAFREGLPLRKQDWKSYLDWAVKAFRVASSGVKDETQIHTHMCYSEFHDILPAIAELDADVITIETSRSRMELLDAFVKFSYPNEIGPGVYDIHSPRVPDASEMFELLKKASRYIDPTLLWVNPDCGLKTRNWPETQTALQKMVDCAKTLRSALQA.

Residues 17-20 (RELK) and lysine 113 contribute to the 5-methyltetrahydropteroyltri-L-glutamate site. L-homocysteine contacts are provided by residues 433-435 (IGS) and glutamate 486. L-methionine is bound by residues 433–435 (IGS) and glutamate 486. 5-methyltetrahydropteroyltri-L-glutamate is bound by residues 517 to 518 (RC) and tryptophan 563. Residue aspartate 601 participates in L-homocysteine binding. Residue aspartate 601 participates in L-methionine binding. Glutamate 607 contributes to the 5-methyltetrahydropteroyltri-L-glutamate binding site. Residues histidine 643, cysteine 645, and glutamate 667 each coordinate Zn(2+). Histidine 696 acts as the Proton donor in catalysis. Residue cysteine 728 participates in Zn(2+) binding.

This sequence belongs to the vitamin-B12 independent methionine synthase family. It depends on Zn(2+) as a cofactor.

The catalysed reaction is 5-methyltetrahydropteroyltri-L-glutamate + L-homocysteine = tetrahydropteroyltri-L-glutamate + L-methionine. It participates in amino-acid biosynthesis; L-methionine biosynthesis via de novo pathway; L-methionine from L-homocysteine (MetE route): step 1/1. In terms of biological role, catalyzes the transfer of a methyl group from 5-methyltetrahydrofolate to homocysteine resulting in methionine formation. The sequence is that of 5-methyltetrahydropteroyltriglutamate--homocysteine methyltransferase from Nitrosomonas europaea (strain ATCC 19718 / CIP 103999 / KCTC 2705 / NBRC 14298).